Here is a 455-residue protein sequence, read N- to C-terminus: Transcription factor mokH (455 aa).

The tract at residues 1–22 is disordered; that stretch reads MALSPVQDPPSHTDKTMPRRAF. A DNA-binding region (zn(2)-C6 fungal-type) is located at residues 26-58; sequence CDRCHAQKIKCIGSEGAVARASCQRCQQAGLRC. Disordered regions lie at residues 68–113 and 296–317; these read KLPK…DSSG and LTPL…RSSV. Over residues 75–88 the composition is skewed to polar residues; that stretch reads AESSPASSTAGLHT. Residues 89-113 show a composition bias toward low complexity; that stretch reads SSSDSSPPVPSDGLPLDLPGPDSSG.

The protein resides in the nucleus. Its function is as follows. Transcription factor that regulates the gene cluster that mediates the biosynthesis of monakolin K, also known as lovastatin, and which acts as a potent competitive inhibitor of HMG-CoA reductase. Monakolin K biosynthesis is performed in two stages. The first stage is catalyzed by the nonaketide synthase mokA, which belongs to type I polyketide synthases and catalyzes the iterative nine-step formation of the polyketide. This PKS stage is completed by the action of dehydrogenase mokE, which catalyzes the NADPH-dependent reduction of the unsaturated tetra-, penta- and heptaketide intermediates that arise during the mokA-mediated biosynthesis of the nonaketide chain and leads to dihydromonacolin L. Covalently bound dihydromonacolin L is released from mokA by the mokD esterase. Conversion of dihydromonacolin L into monacolin L and then monacolin J is subsequently performed with the participation of molecular oxygen and P450 monoogygenase mokC. Finally, mokF performs the conversion of monacoline J to monacoline K through the addition of the side-chain diketide moiety (2R)-2-methylbutanoate produced by the diketide synthase mokB. HMG-CoA reductase mokG may act as a down-regulator of monacolin K production. In Monascus pilosus (Red mold), this protein is Transcription factor mokH.